Consider the following 1008-residue polypeptide: Translation initiation factor IF-2 (1008 aa).

Disordered regions lie at residues 113–136 (AVTA…KGNV), 153–235 (DKDS…PAAP), and 253–405 (GLTV…YRKD). Basic and acidic residues-rich tracts occupy residues 153–180 (DKDS…KAKP) and 189–213 (PKPE…KAET). Low complexity-rich tracts occupy residues 294-329 (GPNK…PRPQ) and 342-358 (GGPN…SNGP). The segment covering 365 to 381 (ASEKGEVTGKQIQDKIK) has biased composition (basic and acidic residues). The 171-residue stretch at 507-677 (DRAPIVTIMG…LLEAEMLELK (171 aa)) folds into the tr-type G domain. Residues 516-523 (GHVDHGKT) form a G1 region. 516–523 (GHVDHGKT) is a GTP binding site. The tract at residues 541-545 (GITQH) is G2. The interval 563-566 (DTPG) is G3. GTP is bound by residues 563 to 567 (DTPGH) and 617 to 620 (NKID). The tract at residues 617 to 620 (NKID) is G4. A G5 region spans residues 653–655 (SAK).

It belongs to the TRAFAC class translation factor GTPase superfamily. Classic translation factor GTPase family. IF-2 subfamily.

It is found in the cytoplasm. One of the essential components for the initiation of protein synthesis. Protects formylmethionyl-tRNA from spontaneous hydrolysis and promotes its binding to the 30S ribosomal subunits. Also involved in the hydrolysis of GTP during the formation of the 70S ribosomal complex. In Cytophaga hutchinsonii (strain ATCC 33406 / DSM 1761 / CIP 103989 / NBRC 15051 / NCIMB 9469 / D465), this protein is Translation initiation factor IF-2.